The sequence spans 154 residues: MVKAVAVLRGDSKITGTVTFEQADENSPTTVSWNIKGNDPNAKRGFHVHQFGDNTNGCTSAGPHFNPYGKTHGAPEDSERHVGDLGNFETDAEGNAVGSKQDKLIKLIGAESVLGRTLVVHAGTDDLGRGGNEESKKTGNAGARPACGVIGIAA.

Cu cation is bound by residues H47, H49, and H64. A disulfide bond links C58 and C147. Positions 64, 72, 81, and 84 each coordinate Zn(2+). H121 is a Cu cation binding site. R144 provides a ligand contact to substrate.

The protein belongs to the Cu-Zn superoxide dismutase family. As to quaternary structure, homodimer. It depends on Cu cation as a cofactor. Zn(2+) serves as cofactor.

The protein localises to the cytoplasm. It catalyses the reaction 2 superoxide + 2 H(+) = H2O2 + O2. In terms of biological role, destroys radicals which are normally produced within the cells and which are toxic to biological systems. This chain is Superoxide dismutase [Cu-Zn] (sodC), found in Aspergillus fumigatus (strain ATCC MYA-4609 / CBS 101355 / FGSC A1100 / Af293) (Neosartorya fumigata).